The primary structure comprises 559 residues: Cellulose biosynthesis protein BcsG (559 aa).

Helical transmembrane passes span 34-54, 68-88, 113-133, and 138-158; these read LLWA…AAFL, HWIA…LPGP, FINW…LFLS, and ITVF…AGPS.

Its subcellular location is the cell inner membrane. This is Cellulose biosynthesis protein BcsG (bcsG) from Escherichia coli (strain K12).